The sequence spans 204 residues: Recombination protein RecR (204 aa).

The segment at 58–75 (CSICQNVTDRDADPCRIC) adopts a C4-type zinc-finger fold. Residues 83 to 181 (SVICVVESPV…MVTKIARGIP (99 aa)) form the Toprim domain.

The protein belongs to the RecR family.

Its function is as follows. May play a role in DNA repair. It seems to be involved in an RecBC-independent recombinational process of DNA repair. It may act with RecF and RecO. This chain is Recombination protein RecR, found in Chlorobium phaeovibrioides (strain DSM 265 / 1930) (Prosthecochloris vibrioformis (strain DSM 265)).